Consider the following 422-residue polypeptide: D-amino acid dehydrogenase (422 aa).

FAD is bound at residue Val3 to Trp17.

Belongs to the DadA oxidoreductase family. It depends on FAD as a cofactor.

It catalyses the reaction a D-alpha-amino acid + A + H2O = a 2-oxocarboxylate + AH2 + NH4(+). Its pathway is amino-acid degradation; D-alanine degradation; NH(3) and pyruvate from D-alanine: step 1/1. Its function is as follows. Oxidative deamination of D-amino acids. The protein is D-amino acid dehydrogenase of Paramagnetospirillum magneticum (strain ATCC 700264 / AMB-1) (Magnetospirillum magneticum).